Consider the following 283-residue polypeptide: Large ribosomal subunit protein uL2 (283 aa).

Disordered stretches follow at residues Thr34 to His53 and Ala224 to Lys283. The segment covering Asn232–Trp245 has biased composition (gly residues). Positions Ala256–Ser268 are enriched in basic residues.

Belongs to the universal ribosomal protein uL2 family. Part of the 50S ribosomal subunit. Forms a bridge to the 30S subunit in the 70S ribosome.

One of the primary rRNA binding proteins. Required for association of the 30S and 50S subunits to form the 70S ribosome, for tRNA binding and peptide bond formation. It has been suggested to have peptidyltransferase activity; this is somewhat controversial. Makes several contacts with the 16S rRNA in the 70S ribosome. This chain is Large ribosomal subunit protein uL2, found in Methylacidiphilum infernorum (isolate V4) (Methylokorus infernorum (strain V4)).